Consider the following 394-residue polypeptide: ATP phosphoribosyltransferase regulatory subunit (394 aa).

The protein belongs to the class-II aminoacyl-tRNA synthetase family. HisZ subfamily. In terms of assembly, heteromultimer composed of HisG and HisZ subunits.

It is found in the cytoplasm. It functions in the pathway amino-acid biosynthesis; L-histidine biosynthesis; L-histidine from 5-phospho-alpha-D-ribose 1-diphosphate: step 1/9. Its function is as follows. Required for the first step of histidine biosynthesis. May allow the feedback regulation of ATP phosphoribosyltransferase activity by histidine. The polypeptide is ATP phosphoribosyltransferase regulatory subunit (Geobacillus kaustophilus (strain HTA426)).